A 277-amino-acid chain; its full sequence is NH(3)-dependent NAD(+) synthetase (277 aa).

An ATP-binding site is contributed by 36–43; that stretch reads GLSGGIDS. A Mg(2+)-binding site is contributed by Asp-42. Arg-118 provides a ligand contact to deamido-NAD(+). Thr-138 serves as a coordination point for ATP. Glu-143 is a binding site for Mg(2+). Positions 167 and 189 each coordinate ATP.

It belongs to the NAD synthetase family. In terms of assembly, homodimer.

It carries out the reaction deamido-NAD(+) + NH4(+) + ATP = AMP + diphosphate + NAD(+) + H(+). It participates in cofactor biosynthesis; NAD(+) biosynthesis; NAD(+) from deamido-NAD(+) (ammonia route): step 1/1. In terms of biological role, catalyzes the ATP-dependent amidation of deamido-NAD to form NAD. Uses ammonia as a nitrogen source. This chain is NH(3)-dependent NAD(+) synthetase, found in Pelodictyon phaeoclathratiforme (strain DSM 5477 / BU-1).